We begin with the raw amino-acid sequence, 622 residues long: Polyamine transporter 3 (622 aa).

Residues 1 to 47 (MNRQESINSFNSDETSSLSDVESQQPQQYIPSESGSKSNMAPNQLKL) are compositionally biased toward polar residues. Residues 1-76 (MNRQESINSF…VPDVNAPQSS (76 aa)) form a disordered region. Residues 1-182 (MNRQESINSF…WPAWIRWSYT (182 aa)) lie on the Cytoplasmic side of the membrane. At Ser55 the chain carries Phosphoserine. Residue Thr98 is modified to Phosphothreonine. Ser101 and Ser132 each carry phosphoserine. Residues 105–152 (TSTAISRTRTRQIDGASSPSSNEDALESDNNEKGKEGDSSGANDEAPD) are disordered. A helical membrane pass occupies residues 183–203 (VLLSILVICVAYGSACISGGL). Residues 204-215 (GTVEKKYHVGME) are Extracellular-facing. A helical membrane pass occupies residues 216–236 (AAILSVSLMVIGFSLGPLIWS). Residues 237–245 (PVSDLYGRR) lie on the Cytoplasmic side of the membrane. A helical transmembrane segment spans residues 246–266 (VAYFVSMGLYVIFNIPCALAP). Residues 267 to 275 (NLGSLLACR) lie on the Extracellular side of the membrane. Residues 276–296 (FLCGVWSSSGLCLVGGSIADM) traverse the membrane as a helical segment. Residues 297-305 (FPSETRGKA) lie on the Cytoplasmic side of the membrane. A helical transmembrane segment spans residues 306–326 (IAFFAFAPYVGPVVGPLVNGF). Topologically, residues 327 to 335 (ISVSTGRMD) are extracellular. Residues 336–356 (LIFWVNMAFAGVMWIISSAIP) form a helical membrane-spanning segment. The Cytoplasmic segment spans residues 357–416 (ETYAPVILKRKAARLRKETGNPKIMTEQEAQGVSMGEMMRACLLRPLYFSVTEPVLVATC). Residues 417 to 437 (FYVCLIYSLLYAFFFAFPVIF) form a helical membrane-spanning segment. At 438 to 446 (GELYGYKDN) the chain is on the extracellular side. The chain crosses the membrane as a helical span at residues 447–467 (LVGLMFIPIVIGALWALATTF). The Cytoplasmic portion of the chain corresponds to 468–487 (YCENKYLQIVKQRKPTPEDR). A helical transmembrane segment spans residues 488-508 (LLGAKIGAPFAAIALWILGAT). Residues 509–512 (AYKH) are Extracellular-facing. The helical transmembrane segment at 513 to 533 (IIWVGPASAGLAFGFGMVLIY) threads the bilayer. Over 534 to 550 (YSLNNYIIDCYVQYASS) the chain is Cytoplasmic. The helical transmembrane segment at 551 to 571 (ALATKVFLRSAGGAAFPLFTI) threads the bilayer. Topologically, residues 572–583 (QMYHKLNLHWGS) are extracellular. A helical membrane pass occupies residues 584 to 604 (WLLAFISTAMIALPFAFSYWG). Residues 605–622 (KGLRHKLSKKDYSIDSIE) lie on the Cytoplasmic side of the membrane.

It belongs to the major facilitator superfamily. DHA1 family. Polyamines/proton antiporter (TC 2.A.1.2.16) subfamily.

The protein localises to the cell membrane. Cell membrane polyamine/proton antiporter, involved in the detoxification of excess polyamines in the cytoplasm. Recognizes spermine, but not spermidine. This is Polyamine transporter 3 (TPO3) from Saccharomyces cerevisiae (strain ATCC 204508 / S288c) (Baker's yeast).